The following is a 224-amino-acid chain: N-terminal Xaa-Pro-Lys N-methyltransferase 1 (224 aa).

S-adenosyl-L-methionine-binding positions include Gly70, Arg75, 92–94 (DVT), 120–121 (LQ), and Gln136.

Belongs to the methyltransferase superfamily. NTM1 family.

It localises to the nucleus. It carries out the reaction N-terminal L-alanyl-L-prolyl-L-lysyl-[protein] + 3 S-adenosyl-L-methionine = N-terminal N,N,N-trimethyl-L-alanyl-L-prolyl-L-lysyl-[protein] + 3 S-adenosyl-L-homocysteine + 3 H(+). It catalyses the reaction N-terminal L-seryl-L-prolyl-L-lysyl-[protein] + 3 S-adenosyl-L-methionine = N-terminal N,N,N-trimethyl-L-seryl-L-prolyl-L-lysyl-[protein] + 3 S-adenosyl-L-homocysteine + 3 H(+). The enzyme catalyses N-terminal L-prolyl-L-prolyl-L-lysyl-[protein] + 2 S-adenosyl-L-methionine = N-terminal N,N-dimethyl-L-prolyl-L-prolyl-L-lysyl-[protein] + 2 S-adenosyl-L-homocysteine + 2 H(+). Functionally, distributive alpha-N-methyltransferase that methylates the N-terminus of target proteins containing the N-terminal motif [Ala/Gly/Pro/Ser]-Pro-Lys when the initiator Met is cleaved. Specifically catalyzes mono-, di- or tri-methylation of the exposed alpha-amino group of the Ala, Gly or Ser residue in the [Ala/Gly/Ser]-Pro-Lys motif and mono- or di-methylation of Pro in the Pro-Pro-Lys motif. Required during mitosis for normal bipolar spindle formation and chromosome segregation via its action on target proteins. The polypeptide is N-terminal Xaa-Pro-Lys N-methyltransferase 1 (ntmt1) (Xenopus tropicalis (Western clawed frog)).